The following is a 79-amino-acid chain: Small ribosomal subunit protein bS18 (79 aa).

It belongs to the bacterial ribosomal protein bS18 family. In terms of assembly, part of the 30S ribosomal subunit. Forms a tight heterodimer with protein bS6.

Functionally, binds as a heterodimer with protein bS6 to the central domain of the 16S rRNA, where it helps stabilize the platform of the 30S subunit. This Pseudarthrobacter chlorophenolicus (strain ATCC 700700 / DSM 12829 / CIP 107037 / JCM 12360 / KCTC 9906 / NCIMB 13794 / A6) (Arthrobacter chlorophenolicus) protein is Small ribosomal subunit protein bS18.